Consider the following 560-residue polypeptide: Muellerian-inhibiting factor (560 aa).

Residues 1–24 (MRDLPLTSLALVLSALGALLGTEA) form the signal peptide. Residues 25 to 451 (LRAEEPAVGT…DPRGPGRAQR (427 aa)) constitute a propeptide that is removed on maturation. Asn64 is a glycosylation site (N-linked (GlcNAc...) asparagine). The interval 259–287 (PLPAHGQLDTVPFPPPRPSAELEESPPSA) is disordered. N-linked (GlcNAc...) asparagine glycosylation occurs at Asn329. 3 cysteine pairs are disulfide-bonded: Cys462-Cys526, Cys488-Cys557, and Cys492-Cys559.

It belongs to the TGF-beta family. As to quaternary structure, homodimer; disulfide-linked. In terms of processing, preproprotein is proteolytically processed to generate N- and C-terminal cleavage products that homodimerize and associate to form a biologically active non-covalent complex. Binding of the non-covalent complex to AMHR2 induces dissociation of the pro-region from the mature C-terminal dimer. The N-terminal portion of the protein, despite having no intrinsic activity, has the role of amplifying the activity of the C-terminus. As to expression, in ovaries, AMH is detected in granulosa cells of early growing follicles.

Its subcellular location is the secreted. Its function is as follows. Plays an important role in several reproductive functions. Induces Muellerian duct regression during male fetal sexual differentiation. Also plays a role in Leydig cell differentiation and function. In female acts as a negative regulator of the primordial to primary follicle transition and decreases FSH sensitivity of growing follicles. AMH signals by binding to a specific type-II receptor, AMHR2, that heterodimerizes with type-I receptors (ACVR1 and BMPR1A), and recruiting SMAD proteins that are translocated to the nucleus to regulate target gene expression. This Homo sapiens (Human) protein is Muellerian-inhibiting factor.